A 394-amino-acid polypeptide reads, in one-letter code: MPANAPITQDVHTIPRKLPDGPVNLVGLTRAAMRDALIAEGTPEKQAKMRVGQIWQWIYQWGVRDFDLMTNLSKAYRAQLKEKFVVEVPEVVTRQVSEDGTRKYLVRIAGGHEVEVVYIPDEGRGTLCVSSQVGCTLTCSFCHTGTQKLVRNLTAAEIIGQVMVARDDLGEWPEIGAPKDETRLLSNIVLMGMGEPLYNFENVRDAMKIAMDPEGIQLSRRRITLSTSGVVPEIARTAVEIGCQLAVSFHATTDDVRDTLVPINKRWNIEVLLEALRAYPKVSNSERITFEYVMLHGVNDSDEDARRLVKLIDGIPAKINLIPFNEWPGAPYKRSSNNRIRAFADIIYKAGYASPIRTPRGEDIMAACGQLKSATERARKSRKQIAAETGLAGA.

Glu-115 (proton acceptor) is an active-site residue. Residues 121–363 enclose the Radical SAM core domain; that stretch reads DEGRGTLCVS…SPIRTPRGED (243 aa). Cysteines 128 and 368 form a disulfide. 3 residues coordinate [4Fe-4S] cluster: Cys-135, Cys-139, and Cys-142. Residues 194–195, Ser-226, 248–250, and Asn-325 each bind S-adenosyl-L-methionine; these read GE and SFH. Cys-368 serves as the catalytic S-methylcysteine intermediate.

It belongs to the radical SAM superfamily. RlmN family. Requires [4Fe-4S] cluster as cofactor.

It is found in the cytoplasm. It carries out the reaction adenosine(2503) in 23S rRNA + 2 reduced [2Fe-2S]-[ferredoxin] + 2 S-adenosyl-L-methionine = 2-methyladenosine(2503) in 23S rRNA + 5'-deoxyadenosine + L-methionine + 2 oxidized [2Fe-2S]-[ferredoxin] + S-adenosyl-L-homocysteine. The catalysed reaction is adenosine(37) in tRNA + 2 reduced [2Fe-2S]-[ferredoxin] + 2 S-adenosyl-L-methionine = 2-methyladenosine(37) in tRNA + 5'-deoxyadenosine + L-methionine + 2 oxidized [2Fe-2S]-[ferredoxin] + S-adenosyl-L-homocysteine. Specifically methylates position 2 of adenine 2503 in 23S rRNA and position 2 of adenine 37 in tRNAs. m2A2503 modification seems to play a crucial role in the proofreading step occurring at the peptidyl transferase center and thus would serve to optimize ribosomal fidelity. The polypeptide is Dual-specificity RNA methyltransferase RlmN (Roseobacter denitrificans (strain ATCC 33942 / OCh 114) (Erythrobacter sp. (strain OCh 114))).